A 306-amino-acid chain; its full sequence is Putative syntaxin-3 (306 aa).

The Cytoplasmic portion of the chain corresponds to 1–279 (MPRDRLKELQ…QKRARKMKVC (279 aa)). The tract at residues 40–180 (QDADFEMFLE…QLSDEEIENA (141 aa)) is required for the regulation of the defecation motor program. The t-SNARE coiled-coil homology domain occupies 204 to 266 (YDEVKSRADE…KQARGNVEEA (63 aa)). A helical; Anchor for type IV membrane protein membrane pass occupies residues 280-300 (IIIGSIIAVLILILFIQSAVC). Residues 301–306 (HFTPIC) lie on the Extracellular side of the membrane.

The protein belongs to the syntaxin family. As to expression, expressed in body wall, pharyngeal, vulval and enteric muscles and in some head neurons.

The protein localises to the cell membrane. Its function is as follows. Potentially involved in docking of synaptic vesicles at presynaptic active zones. Acts in the intestine to regulate anterior body muscle contractions (aBOC) and the expulsion steps during the defecation motor program (DMP). The protein is Putative syntaxin-3 of Caenorhabditis elegans.